The sequence spans 157 residues: MKLSHLDEKNHPKMVDVSDKNITSRIATASGMIYMSQEAFDVIKNNTAKKGPVLQTAIIAAIMGAKKTSEIIPMCHPLMLSKVETDIMEFVKECAFKLIVTVKCEGKTGVEMEALSGVSIGLLTIYDMIKAIDKSMRITDILLESKEGGKSGKFVRS.

Substrate-binding positions include 74-76 (MCH) and 112-113 (ME). The active site involves Asp-127.

The protein belongs to the MoaC family. In terms of assembly, homohexamer; trimer of dimers.

It catalyses the reaction (8S)-3',8-cyclo-7,8-dihydroguanosine 5'-triphosphate = cyclic pyranopterin phosphate + diphosphate. Its pathway is cofactor biosynthesis; molybdopterin biosynthesis. In terms of biological role, catalyzes the conversion of (8S)-3',8-cyclo-7,8-dihydroguanosine 5'-triphosphate to cyclic pyranopterin monophosphate (cPMP). The protein is Cyclic pyranopterin monophosphate synthase of Campylobacter jejuni subsp. jejuni serotype O:6 (strain 81116 / NCTC 11828).